The sequence spans 210 residues: Large ribosomal subunit protein uL3 (210 aa).

It belongs to the universal ribosomal protein uL3 family. Part of the 50S ribosomal subunit. Forms a cluster with proteins L14 and L19.

Functionally, one of the primary rRNA binding proteins, it binds directly near the 3'-end of the 23S rRNA, where it nucleates assembly of the 50S subunit. The polypeptide is Large ribosomal subunit protein uL3 (Pseudothermotoga lettingae (strain ATCC BAA-301 / DSM 14385 / NBRC 107922 / TMO) (Thermotoga lettingae)).